An 860-amino-acid chain; its full sequence is Alanine--tRNA ligase (860 aa).

Positions 553, 557, 655, and 659 each coordinate Zn(2+).

Belongs to the class-II aminoacyl-tRNA synthetase family. Zn(2+) serves as cofactor.

It is found in the cytoplasm. The enzyme catalyses tRNA(Ala) + L-alanine + ATP = L-alanyl-tRNA(Ala) + AMP + diphosphate. In terms of biological role, catalyzes the attachment of alanine to tRNA(Ala) in a two-step reaction: alanine is first activated by ATP to form Ala-AMP and then transferred to the acceptor end of tRNA(Ala). Also edits incorrectly charged Ser-tRNA(Ala) and Gly-tRNA(Ala) via its editing domain. The polypeptide is Alanine--tRNA ligase (Legionella pneumophila (strain Lens)).